A 249-amino-acid polypeptide reads, in one-letter code: MPSAPDAPAAPDAAASVAPNPPAALPVTVRWLGETPYDACFDAMRAFTDARTPDTDDEIWVVEHPPVYTLGQAGNPAHLLVADSGVPLVKVDRGGQITYHGPGQIVAYLLVDLRRRKLMVRTLVTRIEEAVIETLAAYNLASARKAGAPGIYVESGPHRGAKIAALGLKIRNGCSYHGLSVNVKMDLRPFLAINPCGYAGLETIDMASLGATADWHEVAQTLVRRLIAHLDGATAAAALPQQALEQSND.

Positions 53–234 (PDTDDEIWVV…RLIAHLDGAT (182 aa)) constitute a BPL/LPL catalytic domain. Substrate is bound by residues 93–100 (RGGQITYH), 165–167 (ALG), and 178–180 (GLS). Cys196 (acyl-thioester intermediate) is an active-site residue.

Belongs to the LipB family.

The protein resides in the cytoplasm. The catalysed reaction is octanoyl-[ACP] + L-lysyl-[protein] = N(6)-octanoyl-L-lysyl-[protein] + holo-[ACP] + H(+). Its pathway is protein modification; protein lipoylation via endogenous pathway; protein N(6)-(lipoyl)lysine from octanoyl-[acyl-carrier-protein]: step 1/2. Catalyzes the transfer of endogenously produced octanoic acid from octanoyl-acyl-carrier-protein onto the lipoyl domains of lipoate-dependent enzymes. Lipoyl-ACP can also act as a substrate although octanoyl-ACP is likely to be the physiological substrate. This is Octanoyltransferase from Burkholderia mallei (strain NCTC 10247).